The chain runs to 204 residues: Urease accessory protein UreG (204 aa).

12-19 (GPVGSGKT) serves as a coordination point for GTP.

Belongs to the SIMIBI class G3E GTPase family. UreG subfamily. Homodimer. UreD, UreF and UreG form a complex that acts as a GTP-hydrolysis-dependent molecular chaperone, activating the urease apoprotein by helping to assemble the nickel containing metallocenter of UreC. The UreE protein probably delivers the nickel.

It localises to the cytoplasm. Functionally, facilitates the functional incorporation of the urease nickel metallocenter. This process requires GTP hydrolysis, probably effectuated by UreG. The polypeptide is Urease accessory protein UreG (Pseudomonas fluorescens (strain SBW25)).